Consider the following 201-residue polypeptide: RILP-like protein 2 (201 aa).

Positions 14 to 108 (SPEMALDKDP…LRDGPQMGVG (95 aa)) constitute an RH1 domain. A coiled-coil region spans residues 67–155 (LEMLEALVNQ…AQDELQCYKS (89 aa)). In terms of domain architecture, RH2 spans 121 to 197 (RPRFTLQELR…TVKSLFSFKQ (77 aa)). Residues 175–201 (TSSPRSNASKEKSTVKSLFSFKQGKNT) are disordered.

This sequence belongs to the RILPL family.

Its subcellular location is the cytoplasm. It is found in the cytosol. The protein localises to the cytoskeleton. The protein resides in the microtubule organizing center. It localises to the centrosome. Its subcellular location is the cell projection. It is found in the cilium. Its function is as follows. Involved in cell shape and neuronal morphogenesis, positively regulating the establishment and maintenance of dendritic spines. Plays a role in cellular protein transport. The protein is RILP-like protein 2 (rilpl2) of Xenopus laevis (African clawed frog).